The primary structure comprises 258 residues: Sugar fermentation stimulation protein homolog (258 aa).

This sequence belongs to the SfsA family.

The sequence is that of Sugar fermentation stimulation protein homolog from Prochlorococcus marinus (strain NATL2A).